Consider the following 259-residue polypeptide: (3R)-3-hydroxyacyl-CoA dehydrogenase (259 aa).

Residues 13–21 (LVTGAGSGI) and 40–41 (DL) each bind NAD(+). A Phosphoserine modification is found at Ser58. Position 72-74 (72-74 (ADV)) interacts with NAD(+). Ser154 provides a ligand contact to substrate. An N6-succinyllysine modification is found at Lys158. Tyr167 (proton acceptor) is an active-site residue. NAD(+) is bound by residues 167–171 (YAASK) and 200–202 (ITT). Residue Lys171 is modified to N6-succinyllysine.

The protein belongs to the short-chain dehydrogenases/reductases (SDR) family. Heterotetramer with CBR4; contains two molecules of HSD17B8 and CBR4.

The protein localises to the mitochondrion matrix. The enzyme catalyses a (3R)-3-hydroxyacyl-CoA + NAD(+) = a 3-oxoacyl-CoA + NADH + H(+). It carries out the reaction 17beta-estradiol + NAD(+) = estrone + NADH + H(+). The catalysed reaction is testosterone + NAD(+) = androst-4-ene-3,17-dione + NADH + H(+). It catalyses the reaction 17beta-hydroxy-5alpha-androstan-3-one + NAD(+) = 5alpha-androstan-3,17-dione + NADH + H(+). It functions in the pathway steroid biosynthesis; estrogen biosynthesis. The protein operates within lipid metabolism; fatty acid biosynthesis. It participates in lipid metabolism; mitochondrial fatty acid beta-oxidation. Its function is as follows. Required for the solubility and assembly of the heterotetramer 3-ketoacyl-[acyl carrier protein] (ACP) reductase functional complex (KAR or KAR1) that forms part of the mitochondrial fatty acid synthase (mtFAS). Alpha-subunit of the KAR complex that acts as scaffold protein required for the stability of carbonyl reductase type-4 (CBR4, beta-subunit of the KAR complex) and for its 3-ketoacyl-ACP reductase activity, thereby participating in mitochondrial fatty acid biosynthesis. Catalyzes the NAD-dependent conversion of (3R)-3-hydroxyacyl-CoA into 3-ketoacyl-CoA (3-oxoacyl-CoA) with no chain length preference; this enzymatic activity is not needed for the KAR function. Prefers (3R)-3-hydroxyacyl-CoA over (3S)-3-hydroxyacyl-CoA and displays enzymatic activity only in the presence of NAD(+). Cooperates with enoyl-CoA hydratase 1 in mitochondria, together they constitute an alternative route to the auxiliary enzyme pathways for the breakdown of Z-PUFA (cis polyunsaturated fatty acid) enoyl-esters. NAD-dependent 17-beta-hydroxysteroid dehydrogenase with highest activity towards estradiol (17beta-estradiol or E2). Has very low activity towards testosterone and dihydrotestosterone (17beta-hydroxy-5alpha-androstan-3-one). Primarily an oxidative enzyme, it can switch to a reductive mode determined in the appropriate physiologic milieu and catalyze the reduction of estrone (E1) to form biologically active 17beta-estradiol. The protein is (3R)-3-hydroxyacyl-CoA dehydrogenase (HSD17B8) of Canis lupus familiaris (Dog).